Consider the following 110-residue polypeptide: FMRFamide-like neuropeptides 11 (110 aa).

Positions 1 to 22 are cleaved as a signal peptide; it reads MTQFSALALLLIVFVAASFAQS. A propeptide spanning residues 23–29 is cleaved from the precursor; it reads YDDVSAE. A phenylalanine amide mark is found at Phe40 and Phe54. The tract at residues 60–85 is disordered; sequence LDEEDFAPESPLQGKRNGAPQPFVRF. The residue at position 72 (Gln72) is a Glutamine amide. Phenylalanine amide is present on Phe85. Residues 88-110 constitute a propeptide that is removed on maturation; the sequence is SGQLDHMHDLLSTLQKLKFANNK.

The protein belongs to the FARP (FMRFamide related peptide) family. In terms of tissue distribution, each flp gene is expressed in a distinct set of neurons. Flp-11 is expressed in the DD, VD and DVB motor neurons, the PVC and URX interneurons, and the AUA, BAG, DA, LUA, and SAB neurons. Also expressed in head muscle, socket or sheath cells and uterine cells. Expressed exclusively in PHC sensory neurons in males. Expressed in AVK and RIS interneurons.

It localises to the secreted. In terms of biological role, FMRFamides and FMRFamide-like peptides are neuropeptides. Induces sleep-like quiescence behavior following release from RIS interneuron. Helps to sustain locomotion stop after gamma-aminobutyric acid (GABA) induces fast slowing response. Inhibits the late-stage body bend swimming frequency in animals through several receptors including frpr-3, npr-4 and npr-22. Potent inhibitor of the activity of the dissected pharyngeal myogenic muscle system. Acts as a ligand for the npr-22 receptor in vitro. Functionally, acts as a ligand for the npr-22 receptor in vitro. This is FMRFamide-like neuropeptides 11 from Caenorhabditis elegans.